Consider the following 358-residue polypeptide: DnaJ homolog subfamily B member 11 (358 aa).

The N-terminal stretch at M1–A22 is a signal peptide. The J domain occupies D25 to G90. The residue at position 188 (T188) is a Phosphothreonine. N261 carries an N-linked (GlcNAc...) asparagine glycan.

Part of a large chaperone multiprotein complex comprising DNAJB11, HSP90B1, HSPA5, HYOU, PDIA2, PDIA4, PDIA6, PPIB, SDF2L1, UGGT1 and very small amounts of ERP29, but not, or at very low levels, CALR nor CANX. Binds to denatured substrates in an ATP-independent manner. Interacts via the J domain with HSPA5 in an ATP-dependent manner. Contains high-mannose Endo H-sensitive carbohydrates. Post-translationally, cys-169, Cys-171, Cys-193 and Cys-196 form intramolecular disulfide bonds. The preferential partner for each Cys is not known.

The protein resides in the endoplasmic reticulum lumen. As a co-chaperone for HSPA5 it is required for proper folding, trafficking or degradation of proteins. Binds directly to both unfolded proteins that are substrates for ERAD and nascent unfolded peptide chains, but dissociates from the HSPA5-unfolded protein complex before folding is completed. May help recruiting HSPA5 and other chaperones to the substrate. Stimulates HSPA5 ATPase activity. It is necessary for maturation and correct trafficking of PKD1. The polypeptide is DnaJ homolog subfamily B member 11 (DNAJB11) (Bos taurus (Bovine)).